The chain runs to 357 residues: Holliday junction branch migration complex subunit RuvB (357 aa).

Positions 3–193 are large ATPase domain (RuvB-L); it reads WDDTTDAEAA…FGFTAHMEFY (191 aa). ATP-binding positions include Leu-32, Arg-33, Gly-74, Lys-77, Thr-78, Thr-79, 140 to 142, Arg-183, Tyr-193, and Arg-230; that span reads EDF. Thr-78 serves as a coordination point for Mg(2+). The segment at 194 to 264 is small ATPAse domain (RuvB-S); the sequence is GPAELERVIH…IAAAALAVYE (71 aa). The segment at 267–357 is head domain (RuvB-H); sequence ARGLDRLDRG…GNGQPDLFGA (91 aa). Arg-303, Arg-322, and Arg-327 together coordinate DNA. A disordered region spans residues 337 to 357; the sequence is LGLTPPRPQSSGNGQPDLFGA.

It belongs to the RuvB family. As to quaternary structure, homohexamer. Forms an RuvA(8)-RuvB(12)-Holliday junction (HJ) complex. HJ DNA is sandwiched between 2 RuvA tetramers; dsDNA enters through RuvA and exits via RuvB. An RuvB hexamer assembles on each DNA strand where it exits the tetramer. Each RuvB hexamer is contacted by two RuvA subunits (via domain III) on 2 adjacent RuvB subunits; this complex drives branch migration. In the full resolvosome a probable DNA-RuvA(4)-RuvB(12)-RuvC(2) complex forms which resolves the HJ.

Its subcellular location is the cytoplasm. The catalysed reaction is ATP + H2O = ADP + phosphate + H(+). Its function is as follows. The RuvA-RuvB-RuvC complex processes Holliday junction (HJ) DNA during genetic recombination and DNA repair, while the RuvA-RuvB complex plays an important role in the rescue of blocked DNA replication forks via replication fork reversal (RFR). RuvA specifically binds to HJ cruciform DNA, conferring on it an open structure. The RuvB hexamer acts as an ATP-dependent pump, pulling dsDNA into and through the RuvAB complex. RuvB forms 2 homohexamers on either side of HJ DNA bound by 1 or 2 RuvA tetramers; 4 subunits per hexamer contact DNA at a time. Coordinated motions by a converter formed by DNA-disengaged RuvB subunits stimulates ATP hydrolysis and nucleotide exchange. Immobilization of the converter enables RuvB to convert the ATP-contained energy into a lever motion, pulling 2 nucleotides of DNA out of the RuvA tetramer per ATP hydrolyzed, thus driving DNA branch migration. The RuvB motors rotate together with the DNA substrate, which together with the progressing nucleotide cycle form the mechanistic basis for DNA recombination by continuous HJ branch migration. Branch migration allows RuvC to scan DNA until it finds its consensus sequence, where it cleaves and resolves cruciform DNA. The protein is Holliday junction branch migration complex subunit RuvB of Streptomyces coelicolor (strain ATCC BAA-471 / A3(2) / M145).